The following is a 137-amino-acid chain: Small heat shock protein IbpA (137 aa).

Residues 28–137 (SQSNGGYPPY…ANKPRRIEIN (110 aa)) enclose the sHSP domain.

It belongs to the small heat shock protein (HSP20) family. In terms of assembly, monomer. Forms homomultimers of about 100-150 subunits at optimal growth temperatures. Conformation changes to monomers at high temperatures or high ionic concentrations.

It is found in the cytoplasm. Associates with aggregated proteins, together with IbpB, to stabilize and protect them from irreversible denaturation and extensive proteolysis during heat shock and oxidative stress. Aggregated proteins bound to the IbpAB complex are more efficiently refolded and reactivated by the ATP-dependent chaperone systems ClpB and DnaK/DnaJ/GrpE. Its activity is ATP-independent. The protein is Small heat shock protein IbpA of Salmonella choleraesuis (strain SC-B67).